The primary structure comprises 424 residues: Gamma-glutamyl phosphate reductase (424 aa).

The protein belongs to the gamma-glutamyl phosphate reductase family.

It localises to the cytoplasm. It carries out the reaction L-glutamate 5-semialdehyde + phosphate + NADP(+) = L-glutamyl 5-phosphate + NADPH + H(+). It participates in amino-acid biosynthesis; L-proline biosynthesis; L-glutamate 5-semialdehyde from L-glutamate: step 2/2. Functionally, catalyzes the NADPH-dependent reduction of L-glutamate 5-phosphate into L-glutamate 5-semialdehyde and phosphate. The product spontaneously undergoes cyclization to form 1-pyrroline-5-carboxylate. The protein is Gamma-glutamyl phosphate reductase of Parvibaculum lavamentivorans (strain DS-1 / DSM 13023 / NCIMB 13966).